A 141-amino-acid polypeptide reads, in one-letter code: Protein stum homolog (141 aa).

Ser26 is modified (phosphoserine). 2 helical membrane-spanning segments follow: residues 51–71 (FPVAVICLFLNTFVPGLGTFV) and 87–107 (RHVCCVFWLNIAAALIQILTA).

Belongs to the SPEC3 family. Stum subfamily.

The protein resides in the membrane. This is Protein stum homolog from Homo sapiens (Human).